The chain runs to 151 residues: Ribosome maturation factor RimP (151 aa).

It belongs to the RimP family.

The protein resides in the cytoplasm. Required for maturation of 30S ribosomal subunits. This is Ribosome maturation factor RimP from Caldanaerobacter subterraneus subsp. tengcongensis (strain DSM 15242 / JCM 11007 / NBRC 100824 / MB4) (Thermoanaerobacter tengcongensis).